A 342-amino-acid polypeptide reads, in one-letter code: Anthranilate phosphoribosyltransferase (342 aa).

Residues Gly83, 86-87, Thr91, 93-96, 111-119, and Ser123 each bind 5-phospho-alpha-D-ribose 1-diphosphate; these read GD, NIST, and KHGGRSVSS. Gly83 is an anthranilate binding site. A Mg(2+)-binding site is contributed by Ser95. Arg169 lines the anthranilate pocket. Mg(2+)-binding residues include Asp228 and Glu229.

It belongs to the anthranilate phosphoribosyltransferase family. As to quaternary structure, homodimer. Mg(2+) serves as cofactor.

It carries out the reaction N-(5-phospho-beta-D-ribosyl)anthranilate + diphosphate = 5-phospho-alpha-D-ribose 1-diphosphate + anthranilate. The protein operates within amino-acid biosynthesis; L-tryptophan biosynthesis; L-tryptophan from chorismate: step 2/5. Catalyzes the transfer of the phosphoribosyl group of 5-phosphorylribose-1-pyrophosphate (PRPP) to anthranilate to yield N-(5'-phosphoribosyl)-anthranilate (PRA). This is Anthranilate phosphoribosyltransferase from Laribacter hongkongensis (strain HLHK9).